A 581-amino-acid polypeptide reads, in one-letter code: ATP-dependent RNA helicase DBP3 (581 aa).

The disordered stretch occupies residues 1 to 118; it reads MAATKHSLAD…ASSNSEAPSS (118 aa). 2 stretches are compositionally biased toward basic and acidic residues: residues 7–35 and 53–62; these read SLAD…EKRE and DADRAAEKER. Basic residues predominate over residues 63–73; it reads KKAKKAKKLEK. 2 stretches are compositionally biased toward low complexity: residues 80–89 and 106–118; these read AEASAEPAAE and TTEA…APSS. Positions 160 to 189 match the Q motif motif; the sequence is LEFHQLPATNLLEKKPSPFANYKAPTPIQS. Residues 192 to 365 enclose the Helicase ATP-binding domain; it reads WPFTLSGRDV…ATFMVSPVKI (174 aa). 205-212 is a binding site for ATP; that stretch reads AETGSGKT. The DEAD box signature appears at 311–314; it reads DEAD. One can recognise a Helicase C-terminal domain in the interval 402-551; that stretch reads RLLEVLKEHQ…PVPEDLLKFG (150 aa).

This sequence belongs to the DEAD box helicase family. DDX5/DBP2 subfamily.

It localises to the nucleus. It is found in the nucleolus. The enzyme catalyses ATP + H2O = ADP + phosphate + H(+). ATP-dependent RNA helicase required for 60S ribosomal subunit synthesis. Involved in efficient pre-rRNA processing, predominantly at site A3, which is necessary for the normal formation of 25S and 5.8S rRNAs. The chain is ATP-dependent RNA helicase DBP3 (DBP3) from Gibberella zeae (strain ATCC MYA-4620 / CBS 123657 / FGSC 9075 / NRRL 31084 / PH-1) (Wheat head blight fungus).